A 327-amino-acid polypeptide reads, in one-letter code: MTHSLRVIFAGTPEFAAAALAAIHEAGFPVPLVLTQPDRPAGRGMKLQASAVKRYALERGMAVAQPPSLRRAGKYPAEAVAALDLLHATPHDVMVVAAYGLLLPQEVLELPRHGCINIHASLLPRWRGAAPIHRAIEAGDAETGVTLMQMDAGLDTGAMLHEARVAIAPDDTTATLHDKLAAAGARLIVDALVELERTGALAATPQPADGVTYAEKIGKHEAALDWRKPAAALARQVRAFDPFPGGAGTLDGATLKLWAADAVPGRDDAAPGTIVDIGPDGVVIACGEGALRVTQLQKPGGKRLPAREFLAGAPLAVGQRFAPADAA.

(6S)-5,6,7,8-tetrahydrofolate is bound at residue 121–124 (SLLP).

It belongs to the Fmt family.

The catalysed reaction is L-methionyl-tRNA(fMet) + (6R)-10-formyltetrahydrofolate = N-formyl-L-methionyl-tRNA(fMet) + (6S)-5,6,7,8-tetrahydrofolate + H(+). Its function is as follows. Attaches a formyl group to the free amino group of methionyl-tRNA(fMet). The formyl group appears to play a dual role in the initiator identity of N-formylmethionyl-tRNA by promoting its recognition by IF2 and preventing the misappropriation of this tRNA by the elongation apparatus. The chain is Methionyl-tRNA formyltransferase from Burkholderia pseudomallei (strain K96243).